Consider the following 461-residue polypeptide: MAEKKPELQRGLEARHIELIALGGTIGVGLFMGAASTLKWAGPSVLLAYIIAGLFVFFIMRSMGEMLFLEPVTGSFAVYAHRYMSPFFGYLTAWSYWFMWMAVGISEITAIGVYVQFWFPEMAQWIPALIAVGLVALANLAAVRLYGEIEFWFAMIKVTTIIVMIIIGLGVIFFGFGNGGQAIGFGNLTEHGGFFAGGWKGFLTALCIVVASYQGVELIGITAGEAKNPQVTLRSAVGKVLWRILIFYVGAIFVIVTIFPWNEIGSNGSPFVLTFAKIGITAAAGIINFVVLTAALSGCNSGMYSCGRMLYALAKNRQLPAAVAKVSRHGVPVAGVALSILILLVGSCLNYIIPNPQRVFVYVYSASVLPGMVPWFVILISQLRFRRAHKEAIADHPFRSIMFPWANYLTMAFLVCVLIGMYFNEDTRMSLFVGVIFLLAVTLVYKVFGLNRHGTAHKVGE.

12 consecutive transmembrane segments (helical) span residues 17-37 (IELI…AAST), 40-60 (WAGP…FFIM), 97-117 (WFMW…YVQF), 123-143 (AQWI…LAAV), 156-176 (IKVT…FFGF), 201-221 (GFLT…LIGI), 244-264 (ILIF…WNEI), 278-298 (IGIT…ALSG), 333-353 (VAGV…NYII), 360-380 (FVYV…VILI), 401-421 (IMFP…LIGM), and 430-450 (SLFV…VFGL).

This sequence belongs to the amino acid-polyamine-organocation (APC) superfamily.

The protein resides in the cell inner membrane. The catalysed reaction is L-threonine(in) + H(+)(in) = L-threonine(out) + H(+)(out). It catalyses the reaction L-serine(in) + H(+)(in) = L-serine(out) + H(+)(out). Its function is as follows. Permease that mediates the proton-dependent threonine and serine uptake. This Salmonella typhi protein is Threonine/serine transporter ThrP.